The following is a 218-amino-acid chain: uncharacterized protein (218 aa).

5 consecutive transmembrane segments (helical) span residues 28–48 (ILLF…LSGL), 66–86 (FDIG…WKPL), 92–112 (LGTL…TKIL), 122–142 (MIFC…YLTC), and 173–193 (ISVC…TVLF).

It localises to the cell membrane. This is an uncharacterized protein from Haemophilus influenzae (strain ATCC 51907 / DSM 11121 / KW20 / Rd).